Reading from the N-terminus, the 297-residue chain is Ribosomal RNA small subunit methyltransferase H (297 aa).

S-adenosyl-L-methionine is bound by residues 30-32 (GGY), Asp-48, Phe-75, Asp-96, and Gln-103.

The protein belongs to the methyltransferase superfamily. RsmH family.

The protein resides in the cytoplasm. It catalyses the reaction cytidine(1402) in 16S rRNA + S-adenosyl-L-methionine = N(4)-methylcytidine(1402) in 16S rRNA + S-adenosyl-L-homocysteine + H(+). Specifically methylates the N4 position of cytidine in position 1402 (C1402) of 16S rRNA. This is Ribosomal RNA small subunit methyltransferase H from Ehrlichia chaffeensis (strain ATCC CRL-10679 / Arkansas).